Here is a 172-residue protein sequence, read N- to C-terminus: Dual-action ribosomal maturation protein DarP (172 aa).

It belongs to the DarP family.

It localises to the cytoplasm. Its function is as follows. Member of a network of 50S ribosomal subunit biogenesis factors which assembles along the 30S-50S interface, preventing incorrect 23S rRNA structures from forming. Promotes peptidyl transferase center (PTC) maturation. In Azotobacter vinelandii (strain DJ / ATCC BAA-1303), this protein is Dual-action ribosomal maturation protein DarP.